Consider the following 628-residue polypeptide: Probable alpha-L-arabinofuranosidase A (628 aa).

An N-terminal signal peptide occupies residues 1 to 25 (MVAFSALSGVSAVSLLLSLVQNAHG). N-linked (GlcNAc...) asparagine glycosylation is found at N36, N51, N74, N152, N171, N260, N359, N440, N493, and N610.

Belongs to the glycosyl hydrolase 51 family.

It is found in the secreted. It carries out the reaction Hydrolysis of terminal non-reducing alpha-L-arabinofuranoside residues in alpha-L-arabinosides.. The protein operates within glycan metabolism; L-arabinan degradation. Functionally, alpha-L-arabinofuranosidase involved in the degradation of arabinoxylan, a major component of plant hemicellulose. Acts only on small linear 1,5-alpha-linked L-arabinofuranosyl oligosaccharides. The protein is Probable alpha-L-arabinofuranosidase A (abfA) of Aspergillus niger (strain ATCC MYA-4892 / CBS 513.88 / FGSC A1513).